The chain runs to 248 residues: 14-3-3 protein homolog 2 (248 aa).

This sequence belongs to the 14-3-3 family.

This Echinococcus multilocularis (Fox tapeworm) protein is 14-3-3 protein homolog 2.